The chain runs to 534 residues: Anther-specific proline-rich protein APG (534 aa).

Residues 1–35 (MKRSSLVDSCSYSRIFRSIFCLLSFCIFFLTTTNA) form the signal peptide. The segment covering 59 to 196 (NPPTPDPSPK…SPKPAPSPPK (138 aa)) has biased composition (pro residues). Residues 59 to 202 (NPPTPDPSPK…SPPKPENKTI (144 aa)) form a disordered region. Ser-211 (nucleophile) is an active-site residue. Catalysis depends on residues Asp-508 and His-511.

The protein belongs to the 'GDSL' lipolytic enzyme family. As to expression, found in sporophytic and gametophytic cell types in the anther, only in male fertile plants.

The polypeptide is Anther-specific proline-rich protein APG (APG) (Arabidopsis thaliana (Mouse-ear cress)).